The following is a 423-amino-acid chain: G2/mitotic-specific cyclin-B1 (423 aa).

The residue at position 116 (Ser116) is a Phosphoserine; by CDK1. Ser118 carries the post-translational modification Phosphoserine. Residue Ser123 is modified to Phosphoserine; by PLK1. A Phosphoserine modification is found at Ser137. Interaction with CDK2 regions lie at residues 159–167 (EYVKDIYAY) and 248–251 (YEEM). The residue at position 311 (Thr311) is a Phosphothreonine.

It belongs to the cyclin family. Cyclin AB subfamily. In terms of assembly, interacts with the CDC2 protein kinase to form a serine/threonine kinase holoenzyme complex also known as maturation promoting factor (MPF). The cyclin subunit imparts substrate specificity to the complex. Binds HEI10. Interacts with catalytically active RALBP1 and CDC2 during mitosis to form an endocytotic complex during interphase. Interacts with CCNF; interaction is required for nuclear localization. Interacts with CDK5RAP3. Interacts with RFPL4A and UBE2A. Interacts with INCA1. In terms of processing, ubiquitinated by the SCF(NIPA) complex during interphase, leading to its destruction. Deubiquitinated by USP22 during G2/M phase. Post-translationally, phosphorylated by PLK1 at Ser-123 on centrosomes during prophase: phosphorylation by PLK1 does not cause nuclear import. Phosphorylation at Ser-137 was also reported to be mediated by PLK1 but Ser-123 seems to be the primary phosphorylation site.

Its subcellular location is the cytoplasm. The protein resides in the nucleus. It localises to the cytoskeleton. It is found in the microtubule organizing center. The protein localises to the centrosome. In terms of biological role, essential for the control of the cell cycle at the G2/M (mitosis) transition. The chain is G2/mitotic-specific cyclin-B1 (Ccnb1) from Rattus norvegicus (Rat).